Reading from the N-terminus, the 483-residue chain is PAT complex subunit CCDC47 (483 aa).

The N-terminal stretch at 1–20 (MKAFYAFCVVLLVFGSVSEA) is a signal peptide. At 21–135 (KFDDFEDEED…PAHLQNSWES (115 aa)) the chain is on the cytoplasmic side. The segment at 46-119 (MEDSVTESPQ…DTSSNKNKDP (74 aa)) is disordered. Over residues 60 to 104 (TEDDEDEATVELEGQDESQEGDFEDADTQEGDTESEPYDDEEFEG) the composition is skewed to acidic residues. The span at 105-118 (YEDKPDTSSNKNKD) shows a compositional bias: basic and acidic residues. A helical transmembrane segment spans residues 136–156 (YYLEILMVTGLLAYIMNYIIG). The Lumenal segment spans residues 157-483 (KNKNSRLAQA…KMKQIKVKAM (327 aa)). Asn178 carries N-linked (GlcNAc...) asparagine glycosylation. The tract at residues 424–483 (QRQEAAQSRREEKKRAEKERIMNEEDPEKQRRLEEAALRREQKKLEKKQMKMKQIKVKAM) is disordered. Basic and acidic residues predominate over residues 430–472 (QSRREEKKRAEKERIMNEEDPEKQRRLEEAALRREQKKLEKKQ). A coiled-coil region spans residues 450 to 483 (PEKQRRLEEAALRREQKKLEKKQMKMKQIKVKAM). Basic residues predominate over residues 473-483 (MKMKQIKVKAM).

Belongs to the CCDC47 family. Component of the PAT complex, composed of WDR83OS/Asterix and CCDC47. The PAT complex is part of the multi-pass translocon (MPT) complex, composed of three subcomplexes, the GEL complex (composed of RAB5IF/OPTI and TMCO1), the BOS complex (composed of NCLN/Nicalin, NOMO1 and TMEM147) and the PAT complex (composed of WDR83OS/Asterix and CCDC47). The MPT complex associates with the SEC61 complex. Interacts with VCP, HSPA5, DERL1, DERL2 and SELENOS. As to expression, in the embryo, expressed in the endodermal layer of the yolk sac and in the small intestine.

The protein resides in the endoplasmic reticulum membrane. The protein localises to the rough endoplasmic reticulum membrane. Functionally, component of the multi-pass translocon (MPT) complex that mediates insertion of multi-pass membrane proteins into the lipid bilayer of membranes. The MPT complex takes over after the SEC61 complex: following membrane insertion of the first few transmembrane segments of proteins by the SEC61 complex, the MPT complex occludes the lateral gate of the SEC61 complex to promote insertion of subsequent transmembrane regions. Within the MPT complex, the PAT subcomplex sequesters any highly polar regions in the transmembrane domains away from the non-polar membrane environment until they can be buried in the interior of the fully assembled protein. Within the PAT subcomplex, CCDC47 occludes the lateral gate of the SEC61 complex. Involved in the regulation of calcium ion homeostasis in the ER. Required for proper protein degradation via the ERAD (ER-associated degradation) pathway. Has an essential role in the maintenance of ER organization during embryogenesis. The sequence is that of PAT complex subunit CCDC47 from Mus musculus (Mouse).